Reading from the N-terminus, the 21-residue chain is Agglutinin beta-2 chain (21 aa).

The span at 1–10 (NEQSGKSQTV) shows a compositional bias: polar residues. The disordered stretch occupies residues 1 to 21 (NEQSGKSQTVIVGPWGAQVST).

The protein belongs to the jacalin lectin family. In terms of assembly, tetramer of four alpha chains associated with two or four beta chains.

Functionally, D-galactose-specific lectin, binds the T-antigen structure Gal-beta1,3-GalNAc (Thomsen-Friedenreich-antigen-specific lectin). Potent and selective stimulant of distinct T- and B-cell functions. Shows a unique ability to specifically recognize IgA-1 from human serum. This chain is Agglutinin beta-2 chain, found in Artocarpus integer (Jack fruit).